A 165-amino-acid chain; its full sequence is Large ribosomal subunit protein uL10 (165 aa).

This sequence belongs to the universal ribosomal protein uL10 family. Part of the ribosomal stalk of the 50S ribosomal subunit. The N-terminus interacts with L11 and the large rRNA to form the base of the stalk. The C-terminus forms an elongated spine to which L12 dimers bind in a sequential fashion forming a multimeric L10(L12)X complex.

Functionally, forms part of the ribosomal stalk, playing a central role in the interaction of the ribosome with GTP-bound translation factors. The sequence is that of Large ribosomal subunit protein uL10 (rplJ) from Halalkalibacterium halodurans (strain ATCC BAA-125 / DSM 18197 / FERM 7344 / JCM 9153 / C-125) (Bacillus halodurans).